The following is a 129-amino-acid chain: Protachykinin-1 (129 aa).

Positions 1–19 are cleaved as a signal peptide; it reads MKILVALAVFFLVSTQLFA. Positions 20-56 are excised as a propeptide; that stretch reads EEIGANDDLNYWSDWYDSDQIKEELPEPFEHLLQRIA. Methionine amide is present on residues M68 and M107.

Belongs to the tachykinin family. The substance P form is cleaved at Pro-59 by the prolyl endopeptidase FAP (seprase) activity (in vitro). Substance P is also cleaved and degraded by Angiotensin-converting enzyme (ACE) and neprilysin (MME).

It localises to the secreted. Its function is as follows. Tachykinins are active peptides which excite neurons, evoke behavioral responses, are potent vasodilators and secretagogues, and contract (directly or indirectly) many smooth muscles. The polypeptide is Protachykinin-1 (TAC1) (Homo sapiens (Human)).